Reading from the N-terminus, the 123-residue chain is Protein TraJ (123 aa).

As to quaternary structure, monomer.

It is found in the cytoplasm. Transfer of plasmid RP4 during bacterial conjugation requires the plasmid-encoded TraJ protein, which binds to a 19-base pair invert sequence repetition within the transfer origin. TraJ protein is bound to only one side of the DNA helix. This nucleoprotein structure is the initial complex in the pathway to assemble a functional relaxosome. This Escherichia coli protein is Protein TraJ (traJ).